The chain runs to 686 residues: Acyl-CoA synthetase short-chain family member 3, mitochondrial (686 aa).

The N-terminal 29 residues, 1 to 29 (MKPSWLQCRKVTGAGGLGGSLPASSPARG), are a transit peptide targeting the mitochondrion. 226–229 (EPGR) serves as a coordination point for CoA. Residues 424 to 426 (GER) and 445 to 450 (DHWWQT) each bind ATP. At K517 the chain carries N6-succinyllysine. At K523 the chain carries N6-acetyllysine. Positions 538, 553, and 564 each coordinate ATP. CoA is bound at residue R623.

Belongs to the ATP-dependent AMP-binding enzyme family.

The protein localises to the mitochondrion matrix. The enzyme catalyses acetate + ATP + CoA = acetyl-CoA + AMP + diphosphate. It catalyses the reaction propanoate + ATP + CoA = propanoyl-CoA + AMP + diphosphate. The catalysed reaction is butanoate + ATP + CoA = butanoyl-CoA + AMP + diphosphate. Functionally, catalyzes the synthesis of acetyl-CoA from short-chain fatty acids. Propionate is the preferred substrate but can also utilize acetate and butyrate with a much lower affinity. This is Acyl-CoA synthetase short-chain family member 3, mitochondrial (ACSS3) from Bos taurus (Bovine).